A 65-amino-acid polypeptide reads, in one-letter code: Large ribosomal subunit protein bL35 (65 aa).

A disordered region spans residues 1 to 29 (MPKMKTNRGAAKRFKKTGSGRIKRGKAFT). The segment covering 10–26 (AAKRFKKTGSGRIKRGK) has biased composition (basic residues).

It belongs to the bacterial ribosomal protein bL35 family.

The polypeptide is Large ribosomal subunit protein bL35 (Desulfotalea psychrophila (strain LSv54 / DSM 12343)).